A 164-amino-acid chain; its full sequence is Elicitin-like protein 2 (164 aa).

Positions 1–22 are cleaved as a signal peptide; it reads MFSKTLVVLAAVAAVTVNGLTA. 3 cysteine pairs are disulfide-bonded: C25–C91, C47–C76, and C71–C118. A disordered region spans residues 121–164; that stretch reads ISGGGSTPTTAPPSGTTPTTPTTAPPTGTTPGVTPSPTTPKPAC. Over residues 127-156 the composition is skewed to low complexity; sequence TPTTAPPSGTTPTTPTTAPPTGTTPGVTPS.

This sequence belongs to the elicitin family.

Its subcellular location is the secreted. Induces local and distal defense responses (incompatible hypersensitive reaction) in plants from the solanaceae and cruciferae families. Elicits leaf necrosis and causes the accumulation of pathogenesis-related proteins. Might interact with the lipidic molecules of the plasma membrane. This Pythium oligandrum (Mycoparasitic fungus) protein is Elicitin-like protein 2 (POD-2).